A 235-amino-acid chain; its full sequence is Phosphoribosylaminoimidazole-succinocarboxamide synthase (235 aa).

The protein belongs to the SAICAR synthetase family.

The catalysed reaction is 5-amino-1-(5-phospho-D-ribosyl)imidazole-4-carboxylate + L-aspartate + ATP = (2S)-2-[5-amino-1-(5-phospho-beta-D-ribosyl)imidazole-4-carboxamido]succinate + ADP + phosphate + 2 H(+). Its pathway is purine metabolism; IMP biosynthesis via de novo pathway; 5-amino-1-(5-phospho-D-ribosyl)imidazole-4-carboxamide from 5-amino-1-(5-phospho-D-ribosyl)imidazole-4-carboxylate: step 1/2. This is Phosphoribosylaminoimidazole-succinocarboxamide synthase from Clostridium acetobutylicum (strain ATCC 824 / DSM 792 / JCM 1419 / IAM 19013 / LMG 5710 / NBRC 13948 / NRRL B-527 / VKM B-1787 / 2291 / W).